The following is a 469-amino-acid chain: UDP-N-acetylmuramate--L-alanine ligase (469 aa).

Residue 122-128 (GTHGKTT) participates in ATP binding.

Belongs to the MurCDEF family.

Its subcellular location is the cytoplasm. It catalyses the reaction UDP-N-acetyl-alpha-D-muramate + L-alanine + ATP = UDP-N-acetyl-alpha-D-muramoyl-L-alanine + ADP + phosphate + H(+). Its pathway is cell wall biogenesis; peptidoglycan biosynthesis. Cell wall formation. The chain is UDP-N-acetylmuramate--L-alanine ligase from Legionella pneumophila (strain Paris).